Consider the following 106-residue polypeptide: Large ribosomal subunit protein cL38 (106 aa).

The N-terminal 39 residues, 1–39 (MSVSAIFGTGIVTVAASPVLRQFQVPKLGNGGGLGMVIE), are a transit peptide targeting the chloroplast. Residues 42-70 (SRPQKKSTAHHRKTRPKKTQPWDIKRKPT) are disordered. The segment covering 44 to 59 (PQKKSTAHHRKTRPKK) has biased composition (basic residues).

The protein belongs to the chloroplast-specific ribosomal protein cL38 family. As to quaternary structure, part of the 50S ribosomal subunit.

It is found in the plastid. Its subcellular location is the chloroplast. In Arabidopsis thaliana (Mouse-ear cress), this protein is Large ribosomal subunit protein cL38 (PSRP6).